The following is a 387-amino-acid chain: N-acetyldiaminopimelate deacetylase (387 aa).

Residue D75 is part of the active site. E134 acts as the Proton acceptor in catalysis.

The protein belongs to the peptidase M20A family. N-acetyldiaminopimelate deacetylase subfamily.

It catalyses the reaction N-acetyl-(2S,6S)-2,6-diaminopimelate + H2O = (2S,6S)-2,6-diaminopimelate + acetate. The protein operates within amino-acid biosynthesis; L-lysine biosynthesis via DAP pathway; LL-2,6-diaminopimelate from (S)-tetrahydrodipicolinate (acetylase route): step 3/3. Catalyzes the conversion of N-acetyl-diaminopimelate to diaminopimelate and acetate. This is N-acetyldiaminopimelate deacetylase from Leuconostoc citreum (strain KM20).